A 364-amino-acid chain; its full sequence is Large ribosomal subunit protein bL27m (364 aa).

Residues 1–19 (MFSSSWQQVPKFVVQQVRT) constitute a mitochondrion transit peptide.

Belongs to the bacterial ribosomal protein bL27 family.

Its subcellular location is the mitochondrion. Component of the large subunit of mitochondrial ribosome. The protein is Large ribosomal subunit protein bL27m (MRPL2) of Kluyveromyces lactis (strain ATCC 8585 / CBS 2359 / DSM 70799 / NBRC 1267 / NRRL Y-1140 / WM37) (Yeast).